The following is a 224-amino-acid chain: Peroxiredoxin-6 (224 aa).

Residues leucine 5 to leucine 169 enclose the Thioredoxin domain. A required and sufficient for targeting to lysosomes and lamellar bodies region spans residues aspartate 31–proline 40. The residue at position 44 (threonine 44) is a Phosphothreonine. Cysteine 47 acts as the Cysteine sulfenic acid (-SOH) intermediate; for peroxidase activity in catalysis. An N6-acetyllysine modification is found at lysine 63. Tyrosine 89 is modified (phosphotyrosine). Residue threonine 93 is modified to Phosphothreonine. Aspartate 140 acts as the For phospholipase activity in catalysis. Threonine 177 bears the Phosphothreonine; by MAPK mark. Residue lysine 209 is modified to N6-acetyllysine; alternate. Lysine 209 is subject to N6-succinyllysine; alternate.

Belongs to the peroxiredoxin family. Prx6 subfamily. Homodimer. Interacts with GSTP1; mediates PRDX6 glutathionylation and regeneration. Interacts with APEX1. Interacts with STH. May interact with FAM168B. May interact with HTR2A. Post-translationally, irreversibly inactivated by overoxidation of Cys-47 to sulfinic acid (Cys-SO(2)H) and sulfonic acid (Cys-SO(3)H) forms upon oxidative stress. In terms of processing, phosphorylation at Thr-177 by MAP kinases increases the phospholipase activity of the enzyme. The phosphorylated form exhibits a greater lysophosphatidylcholine acyltransferase activity compared to the non-phosphorylated form. Highly expressed in heart, kidney and liver. Moderate expression in brain and stomach. Very low levels in intestine.

It is found in the cytoplasm. The protein localises to the lysosome. The catalysed reaction is a hydroperoxide + 2 glutathione = an alcohol + glutathione disulfide + H2O. It catalyses the reaction a 1,2-diacyl-sn-glycero-3-phosphocholine + H2O = a 1-acyl-sn-glycero-3-phosphocholine + a fatty acid + H(+). The enzyme catalyses a 1-acyl-sn-glycero-3-phosphocholine + an acyl-CoA = a 1,2-diacyl-sn-glycero-3-phosphocholine + CoA. It carries out the reaction 1-hexadecanoyl-sn-glycero-3-phosphocholine + hexadecanoyl-CoA = 1,2-dihexadecanoyl-sn-glycero-3-phosphocholine + CoA. The catalysed reaction is 1,2-dihexadecanoyl-sn-glycero-3-phosphocholine + H2O = 1-hexadecanoyl-sn-glycero-3-phosphocholine + hexadecanoate + H(+). MJ33 or lithium;[(2R)-1-hexadecoxy-3-(2,2,2-trifluoroethoxy)propan-2-yl] methyl phosphate inhibits its phospholipase A2 activity. CI-976 or 2,2-Dimethyl-N-(2,4,6-trimethoxyphenyl)dodecanamide inhibits its lysophosphatidylcholine acyltransferase activity. Thiol-specific peroxidase that catalyzes the reduction of hydrogen peroxide and organic hydroperoxides to water and alcohols, respectively. Can reduce H(2)O(2) and short chain organic, fatty acid, and phospholipid hydroperoxides. Has phospholipase activity. Can either reduce the oxidized sn-2 fatty acyl group of phospholipids (peroxidase activity) or hydrolyze the sn-2 ester bond of phospholipids (phospholipase activity). These activities are dependent on binding to phospholipids at acidic pH and to oxidized phospholipds at cytosolic pH. Plays a role in cell protection against oxidative stress by detoxifying peroxides and in phospholipid homeostasis. Exhibits acyl-CoA-dependent lysophospholipid acyltransferase which mediates the conversion of lysophosphatidylcholine (1-acyl-sn-glycero-3-phosphocholine or LPC) into phosphatidylcholine (1,2-diacyl-sn-glycero-3-phosphocholine or PC). Shows a clear preference for LPC as the lysophospholipid and for palmitoyl CoA as the fatty acyl substrate. This chain is Peroxiredoxin-6 (Prdx6), found in Mus musculus (Mouse).